Reading from the N-terminus, the 288-residue chain is Polyamine aminopropyltransferase (288 aa).

A PABS domain is found at 9–238 (ETLHDQFGQY…GIMTFAWATD (230 aa)). Gln-33 contacts S-methyl-5'-thioadenosine. Spermidine contacts are provided by His-64 and Asp-88. S-methyl-5'-thioadenosine-binding positions include Glu-108 and 140–141 (DG). Catalysis depends on Asp-158, which acts as the Proton acceptor. Residue 158 to 161 (DCTD) coordinates spermidine. Pro-165 serves as a coordination point for S-methyl-5'-thioadenosine.

The protein belongs to the spermidine/spermine synthase family. Homodimer or homotetramer.

It is found in the cytoplasm. It catalyses the reaction S-adenosyl 3-(methylsulfanyl)propylamine + putrescine = S-methyl-5'-thioadenosine + spermidine + H(+). Its pathway is amine and polyamine biosynthesis; spermidine biosynthesis; spermidine from putrescine: step 1/1. Functionally, catalyzes the irreversible transfer of a propylamine group from the amino donor S-adenosylmethioninamine (decarboxy-AdoMet) to putrescine (1,4-diaminobutane) to yield spermidine. This is Polyamine aminopropyltransferase from Escherichia coli (strain ATCC 8739 / DSM 1576 / NBRC 3972 / NCIMB 8545 / WDCM 00012 / Crooks).